Consider the following 149-residue polypeptide: Gonadotropin subunit beta-2 (149 aa).

A signal peptide spans M1–C24. 6 cysteine pairs are disulfide-bonded: C30/C78, C44/C93, C47/C131, C55/C109, C59/C111, and C114/C121. N34 carries N-linked (GlcNAc...) asparagine glycosylation.

This sequence belongs to the glycoprotein hormones subunit beta family. Heterodimer of an alpha and a beta chain.

It localises to the secreted. Involved in gametogenesis and steroidogenesis. This chain is Gonadotropin subunit beta-2 (cgbb), found in Clupea pallasii (Pacific herring).